The chain runs to 105 residues: Large ribosomal subunit protein eL36 (105 aa).

An N6-acetyllysine modification is found at K62.

Belongs to the eukaryotic ribosomal protein eL36 family. Component of the large ribosomal subunit.

The protein resides in the cytoplasm. It is found in the cytosol. In terms of biological role, component of the large ribosomal subunit. The ribosome is a large ribonucleoprotein complex responsible for the synthesis of proteins in the cell. The chain is Large ribosomal subunit protein eL36 (RPL36) from Homo sapiens (Human).